The sequence spans 386 residues: Histone-lysine N-methyltransferase SETD7 (386 aa).

The span at 1-12 shows a compositional bias: acidic residues; sequence MDSSDDEIACDE. Residues 1 to 21 are disordered; it reads MDSSDDEIACDEGDYKGAKDD. MORN repeat units follow at residues 15–38, 39–61, 62–84, and 109–131; these read YKGA…SGDE, FIGA…DDST, LEGN…DGSI, and FRGQ…DGGS. In terms of domain architecture, SET spans 222 to 344; it reads ELVYAAPSKI…EGDELTVHYT (123 aa). S-adenosyl-L-methionine contacts are provided by residues 234 to 236, asparagine 304, and histidine 305; that span reads AGE.

It belongs to the class V-like SAM-binding methyltransferase superfamily. Histone-lysine methyltransferase family. SET7 subfamily.

It is found in the nucleus. The protein resides in the chromosome. The catalysed reaction is L-lysyl(4)-[histone H3] + S-adenosyl-L-methionine = N(6)-methyl-L-lysyl(4)-[histone H3] + S-adenosyl-L-homocysteine + H(+). It catalyses the reaction L-lysyl-[protein] + S-adenosyl-L-methionine = N(6)-methyl-L-lysyl-[protein] + S-adenosyl-L-homocysteine + H(+). Histone methyltransferase that specifically monomethylates 'Lys-4' of histone H3. H3 'Lys-4' methylation represents a specific tag for epigenetic transcriptional activation. Plays a central role in the transcriptional activation of genes. Also has methyltransferase activity toward non-histone proteins. This Halocynthia roretzi (Sea squirt) protein is Histone-lysine N-methyltransferase SETD7 (setd7).